A 286-amino-acid chain; its full sequence is Beta-lactamase SHV-5 (286 aa).

The signal sequence occupies residues 1 to 21 (MRYIRLCIISLLATLPLAVHA). Ser-66 acts as the Acyl-ester intermediate in catalysis. A disulfide bridge links Cys-73 with Cys-119. Glu-164 functions as the Proton acceptor in the catalytic mechanism. Residue 230-232 (KTG) coordinates substrate.

Belongs to the class-A beta-lactamase family.

The enzyme catalyses a beta-lactam + H2O = a substituted beta-amino acid. SHV enzymes hydrolyze broad spectrum cephalosporins notably cefotaxime and ceftazidime. SHV-5 causes particularly high levels of resistance to aztreonam and ceftazidime. The sequence is that of Beta-lactamase SHV-5 (bla) from Klebsiella pneumoniae.